Reading from the N-terminus, the 291-residue chain is ATP synthase gamma chain (291 aa).

The protein belongs to the ATPase gamma chain family. As to quaternary structure, F-type ATPases have 2 components, CF(1) - the catalytic core - and CF(0) - the membrane proton channel. CF(1) has five subunits: alpha(3), beta(3), gamma(1), delta(1), epsilon(1). CF(0) has three main subunits: a, b and c.

The protein localises to the cell inner membrane. Its function is as follows. Produces ATP from ADP in the presence of a proton gradient across the membrane. The gamma chain is believed to be important in regulating ATPase activity and the flow of protons through the CF(0) complex. This is ATP synthase gamma chain from Cupriavidus metallidurans (strain ATCC 43123 / DSM 2839 / NBRC 102507 / CH34) (Ralstonia metallidurans).